The following is a 338-amino-acid chain: Fructose-1,6-bisphosphatase class 1 (338 aa).

Mg(2+) is bound by residues glutamate 92, aspartate 115, leucine 117, and aspartate 118. Substrate-binding positions include 118-121 (DGSS), asparagine 211, tyrosine 244, and lysine 274. Glutamate 280 is a binding site for Mg(2+).

Belongs to the FBPase class 1 family. Homotetramer. It depends on Mg(2+) as a cofactor.

It is found in the cytoplasm. The enzyme catalyses beta-D-fructose 1,6-bisphosphate + H2O = beta-D-fructose 6-phosphate + phosphate. It participates in carbohydrate biosynthesis; gluconeogenesis. This chain is Fructose-1,6-bisphosphatase class 1, found in Photobacterium profundum (strain SS9).